We begin with the raw amino-acid sequence, 340 residues long: Aliphatic sulfonates import ATP-binding protein SsuB 1 (340 aa).

A disordered region spans residues 44 to 72 (THHHARVAAQGHARGDAQPPAGALARDDG). The region spanning 80–299 (VQLRGVGKRY…ARASAGFAAL (220 aa)) is the ABC transporter domain. Residue 112–119 (GRSGCGKS) coordinates ATP.

It belongs to the ABC transporter superfamily. Aliphatic sulfonates importer (TC 3.A.1.17.2) family. In terms of assembly, the complex is composed of two ATP-binding proteins (SsuB), two transmembrane proteins (SsuC) and a solute-binding protein (SsuA).

It is found in the cell inner membrane. It catalyses the reaction ATP + H2O + aliphatic sulfonate-[sulfonate-binding protein]Side 1 = ADP + phosphate + aliphatic sulfonateSide 2 + [sulfonate-binding protein]Side 1.. Part of the ABC transporter complex SsuABC involved in aliphatic sulfonates import. Responsible for energy coupling to the transport system. This is Aliphatic sulfonates import ATP-binding protein SsuB 1 from Paraburkholderia xenovorans (strain LB400).